A 352-amino-acid polypeptide reads, in one-letter code: Phosphoribosylformylglycinamidine cyclo-ligase (352 aa).

Belongs to the AIR synthase family.

The protein localises to the cytoplasm. It carries out the reaction 2-formamido-N(1)-(5-O-phospho-beta-D-ribosyl)acetamidine + ATP = 5-amino-1-(5-phospho-beta-D-ribosyl)imidazole + ADP + phosphate + H(+). It functions in the pathway purine metabolism; IMP biosynthesis via de novo pathway; 5-amino-1-(5-phospho-D-ribosyl)imidazole from N(2)-formyl-N(1)-(5-phospho-D-ribosyl)glycinamide: step 2/2. The chain is Phosphoribosylformylglycinamidine cyclo-ligase from Pseudomonas putida (strain W619).